The following is a 119-amino-acid chain: Dihydroneopterin aldolase (119 aa).

Substrate contacts are provided by residues Glu-21, Tyr-53, and 72 to 73 (ID). Residue Lys-99 is the Proton donor/acceptor of the active site.

The protein belongs to the DHNA family.

It carries out the reaction 7,8-dihydroneopterin = 6-hydroxymethyl-7,8-dihydropterin + glycolaldehyde. It functions in the pathway cofactor biosynthesis; tetrahydrofolate biosynthesis; 2-amino-4-hydroxy-6-hydroxymethyl-7,8-dihydropteridine diphosphate from 7,8-dihydroneopterin triphosphate: step 3/4. Catalyzes the conversion of 7,8-dihydroneopterin to 6-hydroxymethyl-7,8-dihydropterin. The polypeptide is Dihydroneopterin aldolase (folB) (Streptococcus pyogenes).